The following is a 1129-amino-acid chain: CRISPR-associated endonuclease Cas12b (1129 aa).

The segment at 1–14 (MAVKSIKVKLRLDD) is WED-I (OBD-I) domain. Positions 4-9 (KSIKVK) are binds sgRNA. The segment at 15 to 386 (MPEIRAGLWK…FATFTLPDAT (372 aa)) is REC1 (Helical-1)domain. 2 binds DNA protospacer adjacent motif (PAM) on target DNA regions span residues 118–122 (QQIAR) and 143–144 (GN). The tract at residues 387-518 (AHPIWTRFDK…QSQSEARGER (132 aa)) is WED-II (OBD-II) domain. Residues 442 to 446 (SMSEQ) form a binds sgRNA region. The interval 519–628 (RPPYAAVFRL…LLKLPGETES (110 aa)) is ruvC-I domain. Catalysis depends on aspartate 570, which acts as the For DNase activity of RuvC domain. A binds non-target ssDNA region spans residues 573–574 (LR). A bridge helix domain region spans residues 629–658 (KDLRAIREERQRTLRQLRTQLAYLRLLVRC). The interval 659 to 784 (GSEDVGRRER…SFFGKVSGQV (126 aa)) is REC2 (Helical-II) domain. Binds sgRNA regions lie at residues 742–746 (RPKIR), 753–754 (VG), 792–796 (RFAIT), 800–819 (HIDHAKEDRLKKLADRIIME), and 835–839 (WVAKY). The segment at 785 to 900 (IRAEKGSRFA…GTMYAAFSSR (116 aa)) is ruvC-II domain. The active-site For DNase activity of RuvC domain is glutamate 848. Residues 897-900 (FSSR) form a binds non-target ssDNA region. Serine 899 and arginine 911 together coordinate phosphate. Positions 901–974 (FDARTGAPGI…SAEEGDFHQI (74 aa)) are nuc-I domain. The binds sgRNA stretch occupies residues 973–978 (QIHADL). Residues 975–993 (HADLNAAQNLQQRLWSDFD) form a ruvC-III domain region. Residue aspartate 977 is the For DNase activity of RuvC domain of the active site. The segment at 994-1129 (ISQIRLRCDW…DSACENTGDI (136 aa)) is nuc-II domain.

Belongs to the CRISPR-associated endonuclease Cas12b family. Monomer. It depends on a divalent metal cation as a cofactor.

CRISPR (clustered regularly interspaced short palindromic repeat), is an adaptive immune system that provides protection against mobile genetic elements (viruses, transposable elements and conjugative plasmids). CRISPR clusters contain sequences complementary to antecedent mobile elements and target invading nucleic acids. CRISPR clusters are transcribed and processed into CRISPR RNA (crRNA). In type II CRISPR systems correct processing of pre-crRNA requires a trans-encoded small RNA (tracrRNA), endogenous ribonuclease 3 (rnc) and this protein. The tracrRNA serves as a guide for ribonuclease 3-aided processing of pre-crRNA. Protein-crRNA-tracrRNA endonucleolytically cleave dsDNA target complementary to the spacer; protein is inactive in the absence of crRNA homologous to the target and tracrRNA. Recognizes a short motif in the CRISPR repeat sequences (the 5' PAM or protospacer adjacent motif, TTN in this organism) to help distinguish self versus nonself, as targets within the bacterial CRISPR locus do not have PAMs. PAM recognition is also required for catalytic activity. Cleavage results in staggered 6-8 base 5'-overhangs 14-17 and 23-24 bases downstream of the PAM (protospacer adjacent motif) on the non-target and target strands respectively. Both target and non-target strand DNA are probably independently cleaved in the same active site. The chain is CRISPR-associated endonuclease Cas12b from Alicyclobacillus acidoterrestris (strain ATCC 49025 / DSM 3922 / CIP 106132 / NCIMB 13137 / GD3B).